The following is a 416-amino-acid chain: Inhibitor of growth protein 3 (416 aa).

Disordered regions lie at residues 126–165 (LDTP…PEKK), 177–198 (SDAS…STNN), and 283–319 (QTLT…SSSL). The segment covering 136–152 (HHVHSHSSGEKRKHIPS) has biased composition (basic residues). The span at 156-165 (STTDHVPEKK) shows a compositional bias: basic and acidic residues. A compositionally biased stretch (polar residues) spans 177-187 (SDASKENTAGC). Composition is skewed to low complexity over residues 189-198 (TNLSSSSTNN), 283-293 (QTLTSSATTDS), and 302-319 (NNKS…SSSL). Residues 358–407 (PRYCICNQVSYGEMVGCDNQDCPIEWFHYGCVGLSEAPKGKWYCPQCTAA) form a PHD-type zinc finger. Zn(2+) contacts are provided by Cys361, Cys363, Cys374, Cys379, His385, Cys388, Cys401, and Cys404.

Belongs to the ING family. In terms of assembly, interacts with H3K4me3 and to a lesser extent with H3K4me2. Component of the NuA4 histone acetyltransferase complex.

Its subcellular location is the nucleus. Functionally, component of the NuA4 histone acetyltransferase (HAT) complex which is involved in transcriptional activation of select genes principally by acetylation of nucleosomal histone H4 and H2A. This modification may both alter nucleosome - DNA interactions and promote interaction of the modified histones with other proteins which positively regulate transcription. NuA4 may also play a direct role in DNA repair when directly recruited to sites of DNA damage. The protein is Inhibitor of growth protein 3 (ing3) of Xenopus laevis (African clawed frog).